A 456-amino-acid chain; its full sequence is Palmitoyltransferase PFA4 (456 aa).

Residues 1 to 9 (MAARNWSRV) lie on the Cytoplasmic side of the membrane. Residues 10–30 (WVGGTVILISFIAFSSQIFVI) traverse the membrane as a helical segment. Residues 31-37 (WPWYGRE) are Lumenal-facing. A helical transmembrane segment spans residues 38-58 (ISLDLLMLLVPLNLAAFMIFW). Residues 59–138 (NYRLCVITSP…GNCVGFYNQG (80 aa)) lie on the Cytoplasmic side of the membrane. In terms of domain architecture, DHHC spans 95 to 145 (RYCKNCAHYKPPRAHHCRQCKTCWLKLDHHCPWIGNCVGFYNQGHFIRFLL). The active-site S-palmitoyl cysteine intermediate is C125. Residues 139 to 159 (HFIRFLLWVDIGTTFHLIIMV) traverse the membrane as a helical segment. At 160 to 176 (RRVLYIAEYYHEPTLAD) the chain is on the lumenal side. Residues 177-197 (VLFLVFNFATCVPVWLCVGMF) traverse the membrane as a helical segment. Residues 198–456 (SIYHVYLACG…DPEEESGYTH (259 aa)) are Cytoplasmic-facing. The interval 284–377 (PPQDPSRLPN…YDHYDEGPMY (94 aa)) is disordered. Positions 285–298 (PQDPSRLPNPPPIP) are enriched in pro residues. Positions 309–321 (NGFNPNLRPTNSL) are enriched in polar residues. Positions 337–352 (SHEQGRHYSSGDERDN) are enriched in basic and acidic residues.

Belongs to the DHHC palmitoyltransferase family. PFA4 subfamily.

The protein localises to the endoplasmic reticulum membrane. It catalyses the reaction L-cysteinyl-[protein] + hexadecanoyl-CoA = S-hexadecanoyl-L-cysteinyl-[protein] + CoA. Functionally, mediates the reversible addition of palmitate to target proteins, thereby regulating their membrane association and biological function. Responsible for the modification of a subset of proteins that are critical in cryptococcal pathogenesis, with substrates involved in cell wall synthesis, signal transduction, and membrane trafficking. Palmitoylates chitin synthase CHS3. The chain is Palmitoyltransferase PFA4 from Cryptococcus neoformans var. grubii serotype A (strain H99 / ATCC 208821 / CBS 10515 / FGSC 9487) (Filobasidiella neoformans var. grubii).